Here is a 1411-residue protein sequence, read N- to C-terminus: Zinc finger protein 609 (1411 aa).

8 disordered regions span residues 1–26, 47–190, 353–484, 517–659, 679–963, 1005–1125, 1153–1221, and 1270–1367; these read MSLSSGASGGKGVDANPVETYDSGDE, QKLE…QPVP, PRFC…EPTV, AHAH…ARPI, ASPG…VIQQ, YEEQ…RQAE, KSED…LTQH, and GSKV…STHH. Residues serine 358, serine 361, and serine 379 each carry the phosphoserine modification. Polar residues predominate over residues 377-401; it reads PNSNTPVNETATASDSKGTSNSSKT. Residue threonine 381 is modified to Phosphothreonine. Phosphoserine is present on residues serine 413, serine 433, serine 446, serine 452, serine 467, and serine 470. Residues 423–437 are compositionally biased toward polar residues; that stretch reads ASSTSEDVKASPSSA. Lysine 479 is covalently cross-linked (Glycyl lysine isopeptide (Lys-Gly) (interchain with G-Cter in SUMO2)). The C2H2-type zinc-finger motif lies at 495–520; that stretch reads IDCPHPNCNKKYKHINGLKYHQAHAH. Basic and acidic residues predominate over residues 519–529; that stretch reads AHTDDDSKPEA. Position 533 is a phosphoserine (serine 533). The segment covering 549-563 has biased composition (polar residues); sequence NGASVSQKGSLSPAR. Residues serine 576 and serine 578 each carry the phosphoserine modification. Basic and acidic residues predominate over residues 626–649; sequence SLERKCMEKEKCKKPSSLKPEKIP. Positions 679–700 are enriched in polar residues; that stretch reads ASPGSSSGLTATVAQAMPNSPQ. Basic residues predominate over residues 726-736; it reads DKKKKDKKKKE. Phosphoserine is present on serine 743. Threonine 746 bears the Phosphothreonine mark. Residues 751 to 764 show a composition bias toward basic and acidic residues; the sequence is CRAEEGKSPFRESS. A Phosphoserine modification is found at serine 758. Residue lysine 789 forms a Glycyl lysine isopeptide (Lys-Gly) (interchain with G-Cter in SUMO2) linkage. Residues 798–844 are compositionally biased toward polar residues; it reads FTDNAPSPSIGGSSRLENTTPTQPLTPLHVVTQNGAEASSVKTNSPA. The residue at position 804 (serine 804) is a Phosphoserine. Position 823 is a phosphothreonine (threonine 823). Phosphoserine is present on residues serine 842, serine 846, and serine 849. Residues 855 to 876 show a composition bias toward basic and acidic residues; the sequence is GEGKVDSVKSKDAEQLVKEGAK. Residues 897–908 are compositionally biased toward low complexity; the sequence is SYYSPSYAQSSP. Positions 926 to 950 are enriched in basic and acidic residues; the sequence is TKRDEEPESIEGKVKNDICEEKKPE. Over residues 952–963 the composition is skewed to low complexity; that stretch reads SSSSQQPSVIQQ. A compositionally biased stretch (basic and acidic residues) spans 1020–1042; that stretch reads GVDKKAEMGLKEREAALKEEWKQ. Residue serine 1055 is modified to Phosphoserine. A Glycyl lysine isopeptide (Lys-Gly) (interchain with G-Cter in SUMO2) cross-link involves residue lysine 1061. Basic and acidic residues-rich tracts occupy residues 1097–1113, 1153–1187, and 1195–1208; these read LKVKLSDASHLSKEASE, KSEDERWKEERDRKLKEERSRSKDSVPKEDGKEST, and TSEESRLGSKEPRP. Lysine 1153 participates in a covalent cross-link: Glycyl lysine isopeptide (Lys-Gly) (interchain with G-Cter in SUMO2). Over residues 1286-1296 the composition is skewed to polar residues; sequence PSVTCKSSSES. Lysine 1297 participates in a covalent cross-link: Glycyl lysine isopeptide (Lys-Gly) (interchain with G-Cter in SUMO2). Positions 1328 to 1337 are enriched in gly residues; sequence GCGVVGGGGS.

As to quaternary structure, interacts (via N-terminus) with NIPBL. Interacts with INTS13; promoting association with the integrator complex. As to expression, isoform 1: Expressed in myoblasts and myotubes. Isoform 2: Expressed in myoblasts and myotubes, with a preference in undifferentiated myoblasts.

Its subcellular location is the nucleus. Its function is as follows. Transcription factor, which activates RAG1, and possibly RAG2, transcription. Through the regulation of RAG1/2 expression, may regulate thymocyte maturation. Along with NIPBL and the multiprotein complex Integrator, promotes cortical neuron migration during brain development by regulating the transcription of crucial genes in this process. Preferentially binds promoters containing paused RNA polymerase II. Up-regulates the expression of SEMA3A, NRP1, PLXND1 and GABBR2 genes, among others. Involved in the regulation of myoblast proliferation during myogenesis. This is Zinc finger protein 609 from Homo sapiens (Human).